Reading from the N-terminus, the 93-residue chain is Translation initiation factor IF-1 (93 aa).

The S1-like domain maps to 1-72 (MAKEELIQFE…EKGRLIFRHK (72 aa)). A disordered region spans residues 70-93 (RHKDERPGGPPRSGPPRGGQFRRR).

It belongs to the IF-1 family. Component of the 30S ribosomal translation pre-initiation complex which assembles on the 30S ribosome in the order IF-2 and IF-3, IF-1 and N-formylmethionyl-tRNA(fMet); mRNA recruitment can occur at any time during PIC assembly.

It is found in the cytoplasm. Functionally, one of the essential components for the initiation of protein synthesis. Stabilizes the binding of IF-2 and IF-3 on the 30S subunit to which N-formylmethionyl-tRNA(fMet) subsequently binds. Helps modulate mRNA selection, yielding the 30S pre-initiation complex (PIC). Upon addition of the 50S ribosomal subunit IF-1, IF-2 and IF-3 are released leaving the mature 70S translation initiation complex. The protein is Translation initiation factor IF-1 of Nitrobacter winogradskyi (strain ATCC 25391 / DSM 10237 / CIP 104748 / NCIMB 11846 / Nb-255).